The primary structure comprises 574 residues: Peptidyl-prolyl cis-trans isomerase FKBP9 (574 aa).

The signal sequence occupies residues 1–26 (MAIRARSWRPPPPPLLLLLLWVTGQA). PPIase FKBP-type domains are found at residues 58–146 (GDFV…MDIW), 170–258 (SDFV…LDLH), 282–369 (GDFL…IDFH), and 393–481 (GDYL…LELV). N-linked (GlcNAc...) asparagine glycosylation is found at Asn178, Asn290, Asn306, and Asn401. 2 EF-hand domains span residues 492–527 (WNGEVSANLFEEIDKDGDGEVLLEEFSEYIHAQVAS) and 537–572 (DAEMIVKNMFTNQDRNGDGKVTAEEFKLKDQETKHD). 10 residues coordinate Ca(2+): Asp505, Asp507, Asp509, Glu511, Glu516, Asp550, Asn552, Asp554, Lys556, and Glu561. The Prevents secretion from ER signature appears at 571–574 (HDEL).

Post-translationally, phosphorylated.

It is found in the endoplasmic reticulum. It catalyses the reaction [protein]-peptidylproline (omega=180) = [protein]-peptidylproline (omega=0). With respect to regulation, inhibited by FK506. In terms of biological role, PPIases accelerate the folding of proteins during protein synthesis. This is Peptidyl-prolyl cis-trans isomerase FKBP9 (FKBP9) from Bos taurus (Bovine).